Reading from the N-terminus, the 142-residue chain is Putative pre-16S rRNA nuclease (142 aa).

It belongs to the YqgF nuclease family.

The protein resides in the cytoplasm. Functionally, could be a nuclease involved in processing of the 5'-end of pre-16S rRNA. This is Putative pre-16S rRNA nuclease from Staphylococcus aureus (strain bovine RF122 / ET3-1).